The chain runs to 506 residues: MDNNKIIVFDTTLRDGEQSPGASMNTEEKIQIALQLERLGVDVMEAGFAAASPGDFDAINQIAKQIHSIRIASLARALEKDIKAAGEAISPAKNRRIHTFIATSPIHMEHKLKMTPDEVIKRAVEAVKYAKTFVDDVEFSCEDAGRSDIVFLKEICAAVVEAGARTLNLPDTVGFRMPDEIYNMVKSMVDFIGDRAIISVHNHNDLGLAVANTLASIKAGARQVECTINGLGERAGNAALEEIVMTIRTRSDEFAPLYTDIVTKEIYATSRLVASITGIEPQPNKAIVGKNAFAHESGIHQDGMLKCAQTYEIIKAEDIGAEKNSLVLGKHSGRHAFKDKLINLGFDLDDNEINEAFIKFKELCDKKKEIFDDDIRALVSHEIIKIPEIYSIQTLSTSSCNAGHSSAAVSIKFSDNIISDAALGNGTADAIFKVIDRISGISGELKDYKVNAVSQGKDALAKITVKVVFEGSSCATIGHGLDIDTMMASAKAYVSALNSYLSMKNR.

Residues 6 to 267 (IIVFDTTLRD…YTDIVTKEIY (262 aa)) enclose the Pyruvate carboxyltransferase domain. Asp15, His201, His203, and Asn237 together coordinate Mn(2+). A regulatory domain region spans residues 391–506 (SIQTLSTSSC…LNSYLSMKNR (116 aa)).

It belongs to the alpha-IPM synthase/homocitrate synthase family. LeuA type 1 subfamily. In terms of assembly, homodimer. Mn(2+) serves as cofactor.

It localises to the cytoplasm. It carries out the reaction 3-methyl-2-oxobutanoate + acetyl-CoA + H2O = (2S)-2-isopropylmalate + CoA + H(+). The protein operates within amino-acid biosynthesis; L-leucine biosynthesis; L-leucine from 3-methyl-2-oxobutanoate: step 1/4. Catalyzes the condensation of the acetyl group of acetyl-CoA with 3-methyl-2-oxobutanoate (2-ketoisovalerate) to form 3-carboxy-3-hydroxy-4-methylpentanoate (2-isopropylmalate). The chain is 2-isopropylmalate synthase from Campylobacter fetus subsp. fetus (strain 82-40).